We begin with the raw amino-acid sequence, 230 residues long: Urease accessory protein UreF (230 aa).

This sequence belongs to the UreF family. UreD, UreF and UreG form a complex that acts as a GTP-hydrolysis-dependent molecular chaperone, activating the urease apoprotein by helping to assemble the nickel containing metallocenter of UreC. The UreE protein probably delivers the nickel.

It is found in the cytoplasm. Its function is as follows. Required for maturation of urease via the functional incorporation of the urease nickel metallocenter. The chain is Urease accessory protein UreF from Cupriavidus taiwanensis (strain DSM 17343 / BCRC 17206 / CCUG 44338 / CIP 107171 / LMG 19424 / R1) (Ralstonia taiwanensis (strain LMG 19424)).